The following is a 98-amino-acid chain: Post-transcriptional regulator ComN (98 aa).

Interacts directly with DivIVA.

It is found in the cytoplasm. Required for post-transcription initiation control of the comE operon. Promotes the accumulation of its target comE mRNA to septal and polar sites. The polypeptide is Post-transcriptional regulator ComN (comN) (Bacillus subtilis (strain 168)).